Consider the following 231-residue polypeptide: Isoprenyl transferase (231 aa).

Residue Asp-14 is part of the active site. Asp-14 contacts Mg(2+). Substrate contacts are provided by residues 15–18 (GNGR), Trp-19, Arg-27, His-31, and 59–61 (STE). The active-site Proton acceptor is Asn-62. Substrate contacts are provided by residues Trp-63, Arg-65, Arg-176, and 182–184 (RIS). Glu-195 contributes to the Mg(2+) binding site.

Belongs to the UPP synthase family. In terms of assembly, homodimer. It depends on Mg(2+) as a cofactor.

In terms of biological role, catalyzes the condensation of isopentenyl diphosphate (IPP) with allylic pyrophosphates generating different type of terpenoids. The chain is Isoprenyl transferase from Aquifex aeolicus (strain VF5).